A 279-amino-acid polypeptide reads, in one-letter code: Large ribosomal subunit protein uL2 (279 aa).

Residues 223 to 279 (PVAMNPVDHPMGGGEGRASGGHPRSRKGLPAKGFKTRSRTKASNKYIVERRKTRKKK) form a disordered region. Basic residues predominate over residues 245-264 (PRSRKGLPAKGFKTRSRTKA).

It belongs to the universal ribosomal protein uL2 family. As to quaternary structure, part of the 50S ribosomal subunit. Forms a bridge to the 30S subunit in the 70S ribosome.

Its function is as follows. One of the primary rRNA binding proteins. Required for association of the 30S and 50S subunits to form the 70S ribosome, for tRNA binding and peptide bond formation. It has been suggested to have peptidyltransferase activity; this is somewhat controversial. Makes several contacts with the 16S rRNA in the 70S ribosome. This is Large ribosomal subunit protein uL2 from Christiangramia forsetii (strain DSM 17595 / CGMCC 1.15422 / KT0803) (Gramella forsetii).